We begin with the raw amino-acid sequence, 185 residues long: Elongation factor P (185 aa).

It belongs to the elongation factor P family.

It is found in the cytoplasm. The protein operates within protein biosynthesis; polypeptide chain elongation. Functionally, involved in peptide bond synthesis. Stimulates efficient translation and peptide-bond synthesis on native or reconstituted 70S ribosomes in vitro. Probably functions indirectly by altering the affinity of the ribosome for aminoacyl-tRNA, thus increasing their reactivity as acceptors for peptidyl transferase. In Metamycoplasma arthritidis (strain 158L3-1) (Mycoplasma arthritidis), this protein is Elongation factor P.